A 197-amino-acid polypeptide reads, in one-letter code: Na(+)-translocating NADH-quinone reductase subunit E (197 aa).

Helical transmembrane passes span 11-31, 35-55, 76-96, 108-128, 139-159, and 175-195; these read SVFIENMALSFFLGMCTFLAV, VSTAFGLGVAVIFVLGLSVPV, FLKFITFIGVIAALVQILEMF, LGIYLPLITVNCAIFGAVSFM, VVYGFGAGLGWMLAIVALAGI, and LGITFIAAGLMAMAFMSFSGI.

It belongs to the NqrDE/RnfAE family. In terms of assembly, composed of six subunits; NqrA, NqrB, NqrC, NqrD, NqrE and NqrF.

It is found in the cell inner membrane. It carries out the reaction a ubiquinone + n Na(+)(in) + NADH + H(+) = a ubiquinol + n Na(+)(out) + NAD(+). In terms of biological role, NQR complex catalyzes the reduction of ubiquinone-1 to ubiquinol by two successive reactions, coupled with the transport of Na(+) ions from the cytoplasm to the periplasm. NqrA to NqrE are probably involved in the second step, the conversion of ubisemiquinone to ubiquinol. This Neisseria meningitidis serogroup B (strain ATCC BAA-335 / MC58) protein is Na(+)-translocating NADH-quinone reductase subunit E.